Consider the following 206-residue polypeptide: Small ribosomal subunit protein uS4 (206 aa).

In terms of domain architecture, S4 RNA-binding spans Arg-98 to Lys-158.

Belongs to the universal ribosomal protein uS4 family. As to quaternary structure, part of the 30S ribosomal subunit. Contacts protein S5. The interaction surface between S4 and S5 is involved in control of translational fidelity.

Functionally, one of the primary rRNA binding proteins, it binds directly to 16S rRNA where it nucleates assembly of the body of the 30S subunit. With S5 and S12 plays an important role in translational accuracy. This chain is Small ribosomal subunit protein uS4, found in Thermoanaerobacter pseudethanolicus (strain ATCC 33223 / 39E) (Clostridium thermohydrosulfuricum).